The following is a 328-amino-acid chain: 4-hydroxythreonine-4-phosphate dehydrogenase (328 aa).

Residue threonine 125 participates in substrate binding. Positions 160, 203, and 269 each coordinate a divalent metal cation. Lysine 277, asparagine 286, and arginine 295 together coordinate substrate.

This sequence belongs to the PdxA family. In terms of assembly, homodimer. The cofactor is a divalent metal cation.

Its subcellular location is the cytoplasm. It carries out the reaction 4-(phosphooxy)-L-threonine + NAD(+) = 3-amino-2-oxopropyl phosphate + CO2 + NADH. The protein operates within cofactor biosynthesis; pyridoxine 5'-phosphate biosynthesis; pyridoxine 5'-phosphate from D-erythrose 4-phosphate: step 4/5. Catalyzes the NAD(P)-dependent oxidation of 4-(phosphooxy)-L-threonine (HTP) into 2-amino-3-oxo-4-(phosphooxy)butyric acid which spontaneously decarboxylates to form 3-amino-2-oxopropyl phosphate (AHAP). The protein is 4-hydroxythreonine-4-phosphate dehydrogenase of Synechococcus sp. (strain RCC307).